A 106-amino-acid chain; its full sequence is Serine rich endogenous peptide 7 (106 aa).

The signal sequence occupies residues 1–26; it reads MGKKCSSKFRQMLVLVLLLIVFTCLS. Composition is skewed to basic and acidic residues over residues 46 to 56 and 65 to 77; these read GIEDEGQERTH and RSVE…EGRR. A disordered region spans residues 46–106; that stretch reads GIEDEGQERT…GGGRIPVAAS (61 aa). 2 short sequence motifs (SCOOP motif) span residues 58–72 and 86–100; these read LNSK…KTHH and GIRA…GGGR. 2 consecutive short sequence motifs (sxS motif essential for MIK2 binding) follow at residues 64–66 and 92–94; these read SRS and SKS.

Belongs to the serine rich endogenous peptide (SCOOP) phytocytokine family. Interacts with MIK2 (via extracellular leucine-rich repeat domain); this interaction triggers the formation of complex between MIK2 and the BAK1/SERK3 and SERK4 coreceptors, and subsequent BAK1 activation by phosphorylation. As to expression, mostly expressed in roots, and, to a lower extent, in seedlings shoots.

It localises to the cell membrane. It is found in the secreted. The protein localises to the extracellular space. The protein resides in the apoplast. Functionally, brassicaceae-specific phytocytokine (plant endogenous peptide released into the apoplast) perceived by MIK2 in a BAK1/SERK3 and SERK4 coreceptors-dependent manner, that modulates various physiological and antimicrobial processes including growth prevention and reactive oxygen species (ROS) response regulation. In Arabidopsis thaliana (Mouse-ear cress), this protein is Serine rich endogenous peptide 7.